The chain runs to 759 residues: LPS-assembly protein LptD (759 aa).

Positions 1–22 are cleaved as a signal peptide; sequence MPLPIPRLLIPALLLASGASLA.

It belongs to the LptD family. As to quaternary structure, component of the lipopolysaccharide transport and assembly complex. Interacts with LptE and LptA.

It is found in the cell outer membrane. Its function is as follows. Together with LptE, is involved in the assembly of lipopolysaccharide (LPS) at the surface of the outer membrane. In Alcanivorax borkumensis (strain ATCC 700651 / DSM 11573 / NCIMB 13689 / SK2), this protein is LPS-assembly protein LptD.